The sequence spans 116 residues: Ribosome-binding factor A (116 aa).

The protein belongs to the RbfA family. Monomer. Binds 30S ribosomal subunits, but not 50S ribosomal subunits or 70S ribosomes.

The protein localises to the cytoplasm. Functionally, one of several proteins that assist in the late maturation steps of the functional core of the 30S ribosomal subunit. Associates with free 30S ribosomal subunits (but not with 30S subunits that are part of 70S ribosomes or polysomes). Required for efficient processing of 16S rRNA. May interact with the 5'-terminal helix region of 16S rRNA. This Clostridium botulinum (strain Eklund 17B / Type B) protein is Ribosome-binding factor A.